The chain runs to 355 residues: Ribosomal RNA small subunit methyltransferase H (355 aa).

S-adenosyl-L-methionine-binding positions include 55-57, Asp-75, Asp-122, and Gln-129; that span reads GGH. Residues 327–355 are disordered; that stretch reads ERTSQPLPATGAEDFVPAVPGAAEKGRRR.

Belongs to the methyltransferase superfamily. RsmH family.

The protein resides in the cytoplasm. It catalyses the reaction cytidine(1402) in 16S rRNA + S-adenosyl-L-methionine = N(4)-methylcytidine(1402) in 16S rRNA + S-adenosyl-L-homocysteine + H(+). Functionally, specifically methylates the N4 position of cytidine in position 1402 (C1402) of 16S rRNA. In Bordetella avium (strain 197N), this protein is Ribosomal RNA small subunit methyltransferase H.